A 120-amino-acid polypeptide reads, in one-letter code: Membrane-anchored ubiquitin-fold protein 4 (120 aa).

The Ubiquitin-like domain maps to 7–73; it reads VELKFRLYDG…LENGKTVAQC (67 aa). C115 is lipidated: S-palmitoyl cysteine. Position 117 is a cysteine methyl ester (C117). Residue C117 is the site of S-farnesyl cysteine attachment. Residues 118 to 120 constitute a propeptide, removed in mature form; that stretch reads TIM.

As to expression, ubiquitous.

Its subcellular location is the cell membrane. In terms of biological role, may serve as docking site to facilitate the association of other proteins to the plasma membrane. The sequence is that of Membrane-anchored ubiquitin-fold protein 4 (MUB4) from Arabidopsis thaliana (Mouse-ear cress).